The following is a 286-amino-acid chain: Small ribosomal subunit protein uS2 (286 aa).

The segment at 257-286 (KDNKSNKSNTINADENIKESDLIGGSNNEG) is disordered.

It belongs to the universal ribosomal protein uS2 family.

The sequence is that of Small ribosomal subunit protein uS2 from Ehrlichia ruminantium (strain Gardel).